Reading from the N-terminus, the 152-residue chain is Transcriptional repressor NrdR (152 aa).

The segment at 3 to 34 (CAFCGNPDTQVIDSRVSEDGSSIRRRRRCPAC) is a zinc-finger region. The region spanning 49–139 (PQVVKTAGHR…VYRSFQDISE (91 aa)) is the ATP-cone domain.

Belongs to the NrdR family. It depends on Zn(2+) as a cofactor.

Its function is as follows. Negatively regulates transcription of bacterial ribonucleotide reductase nrd genes and operons by binding to NrdR-boxes. This chain is Transcriptional repressor NrdR, found in Chromobacterium violaceum (strain ATCC 12472 / DSM 30191 / JCM 1249 / CCUG 213 / NBRC 12614 / NCIMB 9131 / NCTC 9757 / MK).